A 122-amino-acid polypeptide reads, in one-letter code: Large ribosomal subunit protein uL14 (122 aa).

Belongs to the universal ribosomal protein uL14 family. As to quaternary structure, part of the 50S ribosomal subunit. Forms a cluster with proteins L3 and L19. In the 70S ribosome, L14 and L19 interact and together make contacts with the 16S rRNA in bridges B5 and B8.

Functionally, binds to 23S rRNA. Forms part of two intersubunit bridges in the 70S ribosome. The protein is Large ribosomal subunit protein uL14 of Shewanella sediminis (strain HAW-EB3).